The primary structure comprises 144 residues: L-fucose mutarotase (144 aa).

The Proton donor role is filled by His-22. Substrate-binding positions include Asp-30, Arg-109, and 131–133; that span reads YGN.

The protein belongs to the RbsD / FucU family. FucU mutarotase subfamily. Homodecamer.

It localises to the cytoplasm. The enzyme catalyses alpha-L-fucose = beta-L-fucose. It functions in the pathway carbohydrate metabolism; L-fucose metabolism. Functionally, involved in the anomeric conversion of L-fucose. The sequence is that of L-fucose mutarotase from Haemophilus influenzae (strain PittEE).